Consider the following 807-residue polypeptide: Probable phosphoketolase (807 aa).

The protein belongs to the XFP family. It depends on thiamine diphosphate as a cofactor.

In Mesorhizobium japonicum (strain LMG 29417 / CECT 9101 / MAFF 303099) (Mesorhizobium loti (strain MAFF 303099)), this protein is Probable phosphoketolase.